The chain runs to 438 residues: (3,5-dihydroxyphenyl)acetyl-CoA 1,2-dioxygenase (438 aa).

Substrate contacts are provided by residues aspartate 183, glutamate 189, 222 to 225 (HPRY), 233 to 238 (AGINLK), glycine 296, 325 to 327 (IPG), and glutamine 416.

Belongs to the enoyl-CoA hydratase/isomerase family. As to quaternary structure, homohexamer; dimer of trimers.

The catalysed reaction is (3,5-dihydroxyphenyl)acetyl-CoA + O2 = 2-(3,5-dihydroxyphenyl)-2-oxoacetate + CoA + H(+). Its activity is regulated as follows. Inhibited by DPA-S-(N-acetylcysteamine). Involved in the biosynthesis of the nonproteinogenic amino acid monomer (S)-3,5-dihydroxyphenylglycine (Dpg) responsible of the production of vancomycin and teicoplanin antibiotics. Catalyzes the unusual conversion 3,5-dihydroxyphenylacetyl-CoA (DPA-CoA) to 3,5-dihydroxyphenylglyoxylate. DpgC performed a net four-electron oxidation of the benzylic carbon of DPA-CoA and the hydrolysis of the thioester bond to generate free CoA. DpgC has the ability to process a diverse range of substituted phenylacetyl-CoA substrates. The chain is (3,5-dihydroxyphenyl)acetyl-CoA 1,2-dioxygenase from Streptomyces toyocaensis.